Consider the following 596-residue polypeptide: ATP-binding protein Uup (596 aa).

2 consecutive ABC transporter domains span residues 1-222 and 290-516; these read MSLI…RIEK and FKLD…SKIN. ATP is bound by residues 36–43 and 322–329; these read GKNGAGKS and GDNGCGKS. The C-terminal domain (CTD), binds DNA stretch occupies residues 519-596; that stretch reads IKIKNNFKKE…LEKNIINTKI (78 aa).

This sequence belongs to the ABC transporter superfamily. ABCF family. Uup subfamily.

The protein localises to the cytoplasm. It catalyses the reaction ATP + H2O = ADP + phosphate + H(+). Functionally, probably plays a role in ribosome assembly or function. May be involved in resolution of branched DNA intermediates that result from template switching in postreplication gaps. Binds DNA and has ATPase activity. This chain is ATP-binding protein Uup, found in Buchnera aphidicola subsp. Acyrthosiphon pisum (strain APS) (Acyrthosiphon pisum symbiotic bacterium).